The chain runs to 136 residues: ATP synthase epsilon chain (136 aa).

Belongs to the ATPase epsilon chain family. In terms of assembly, F-type ATPases have 2 components, CF(1) - the catalytic core - and CF(0) - the membrane proton channel. CF(1) has five subunits: alpha(3), beta(3), gamma(1), delta(1), epsilon(1). CF(0) has three main subunits: a, b and c.

It localises to the cell inner membrane. In terms of biological role, produces ATP from ADP in the presence of a proton gradient across the membrane. This Hydrogenobaculum sp. (strain Y04AAS1) protein is ATP synthase epsilon chain.